The following is a 1436-amino-acid chain: Antigen WC1.1 (1436 aa).

An N-terminal signal peptide occupies residues 1–25 (MALGRHLSLRGLCVLLLGTMVGGQA). 3 consecutive SRCR domains span residues 28 to 131 (LRLK…VVCS), 134 to 234 (VRLA…VVCS), and 239 to 340 (VRLM…VICS). 2 cysteine pairs are disulfide-bonded: Cys-66/Cys-130 and Cys-97/Cys-107. An N-linked (GlcNAc...) asparagine glycan is attached at Asn-162. 2 cysteine pairs are disulfide-bonded: Cys-172/Cys-233 and Cys-203/Cys-213. Asn-244 and Asn-256 each carry an N-linked (GlcNAc...) asparagine glycan. 3 cysteine pairs are disulfide-bonded: Cys-265–Cys-329, Cys-278–Cys-339, and Cys-309–Cys-319. Residues Asn-351, Asn-424, and Asn-444 are each glycosylated (N-linked (GlcNAc...) asparagine). 5 SRCR domains span residues 376–476 (LRLV…VICS), 481–581 (LRMV…IWCA), 586–686 (IRLV…VICS), 689–789 (VRLA…VVCS), and 794–895 (VQLM…VICS). 3 cysteine pairs are disulfide-bonded: Cys-401–Cys-465, Cys-414–Cys-475, and Cys-445–Cys-455. N-linked (GlcNAc...) asparagine glycans are attached at residues Asn-499 and Asn-531. Intrachain disulfides connect Cys-506-Cys-570, Cys-519-Cys-580, Cys-550-Cys-560, Cys-611-Cys-675, Cys-624-Cys-685, and Cys-655-Cys-665. N-linked (GlcNAc...) asparagine glycosylation is present at Asn-717. Intrachain disulfides connect Cys-727/Cys-788 and Cys-758/Cys-768. The N-linked (GlcNAc...) asparagine glycan is linked to Asn-799. 3 disulfides stabilise this stretch: Cys-820–Cys-884, Cys-833–Cys-894, and Cys-864–Cys-874. N-linked (GlcNAc...) asparagine glycosylation is found at Asn-897, Asn-979, and Asn-999. 3 consecutive SRCR domains span residues 931–1031 (LRLV…VICS), 1036–1136 (LRMV…ISCE), and 1155–1255 (LRLR…VRCS). Intrachain disulfides connect Cys-956-Cys-1020, Cys-969-Cys-1030, and Cys-1000-Cys-1010. 2 N-linked (GlcNAc...) asparagine glycosylation sites follow: Asn-1054 and Asn-1086. 3 cysteine pairs are disulfide-bonded: Cys-1061–Cys-1125, Cys-1074–Cys-1135, and Cys-1105–Cys-1115. N-linked (GlcNAc...) asparagine glycosylation is found at Asn-1173 and Asn-1214. 3 cysteine pairs are disulfide-bonded: Cys-1180–Cys-1244, Cys-1193–Cys-1254, and Cys-1224–Cys-1234. Positions 1337 to 1410 (EGLGSPDQMT…PGEGEESFWL (74 aa)) are disordered. Over residues 1348 to 1358 (VPDENYDDAEE) the composition is skewed to acidic residues. The segment covering 1384–1393 (RSSQTGSFLN) has biased composition (polar residues). Asn-1393 carries N-linked (GlcNAc...) asparagine glycosylation.

In terms of tissue distribution, expressed on subsets of CD4-CD8- gamma delta T lymphocytes.

It is found in the secreted. The sequence is that of Antigen WC1.1 from Bos taurus (Bovine).